The sequence spans 461 residues: Argininosuccinate lyase (461 aa).

Belongs to the lyase 1 family. Argininosuccinate lyase subfamily.

It localises to the cytoplasm. It carries out the reaction 2-(N(omega)-L-arginino)succinate = fumarate + L-arginine. It participates in amino-acid biosynthesis; L-arginine biosynthesis; L-arginine from L-ornithine and carbamoyl phosphate: step 3/3. The protein is Argininosuccinate lyase of Aeromonas salmonicida (strain A449).